Here is a 761-residue protein sequence, read N- to C-terminus: MNQMLFVTKRNGKIELINLDKIHRVLNWAAKGLENISISQVALKSRIQFYNNIKTTIIHETIIKAAADLISENSPDYQYMAARLTIFHLRKKAFGQFNPPNLYDHVKNMIKLEKYDQHLLNDYPKQDFLIMNSFIKHRRDMNFSYAAVKQLEGKYLIQNRVTKKIYESAQFLYILISACLFSKYPNETRMKYIKNFYDAISTFKISLPTPIMAGLRTPTRQFSSCVLIESEDNLNSINATTSAIVKYVSQRAGIGINAGRIRALGSPIRNGDTLHTGCIPFYKHFQSAVKSCSQGGVRGGAATIFYPIWHFEIESLLVLKNNRGIEENRVRHMDYSVQLNKLMYQRLILGEHITLFSPSDVPNLYDSFFNNQEKFERLYIKYENDKTIRKKKVKASYLFSLMMQERTSTGRIYIQNVDHCNSHSAFNPKIAPIRQSNLCLEITLPTKALQDVHDKNGEISLCTLSAINLGSLNNLNDLSKLSNLIVRALDSVLDYQEYPILSAKKSALSRRTLGIGVINFAYYLAKNGVRYSDGSANNLTHRTFEAIQYHLLNASCVLAQEKGACHWFSHTNYYKGILPIDTYKKNVDEICNEPLHLDWELLRKKIKKYGLRNSTLSALMPSETSSQISNATNGIEPPRGLISIKASKDGMLRQVVPEYKRLKNNYELLWNIPNNTGYLQLASIMQKFVDQSISANTNYDPKLFPNNKIPMQQLILDLLTAYKLGLKTLYYQNTRDGASDHQTEDIQFSKNENCNHGACKI.

Positions 5-95 (LFVTKRNGKI…IFHLRKKAFG (91 aa)) constitute an ATP-cone domain. ATP contacts are provided by residues Lys-9, 15-21 (ELINLDK), Thr-55, and Lys-91. Position 209 (Thr-209) interacts with GDP. An intrachain disulfide couples Cys-225 to Cys-462. DTTP contacts are provided by residues 232-234 (DNL), Arg-262, and Arg-269. Asn-437 is a GDP binding site. The active-site Proton acceptor is Asn-437. Cys-439 serves as the catalytic Cysteine radical intermediate. GDP is bound by residues Glu-441 and 623–625 (ETS). Catalysis depends on Glu-441, which acts as the Proton acceptor.

Belongs to the ribonucleoside diphosphate reductase large chain family. Tetramer of two alpha and two beta subunits.

It carries out the reaction a 2'-deoxyribonucleoside 5'-diphosphate + [thioredoxin]-disulfide + H2O = a ribonucleoside 5'-diphosphate + [thioredoxin]-dithiol. Its activity is regulated as follows. Under complex allosteric control mediated by deoxynucleoside triphosphates and ATP binding to separate specificity and activation sites on the alpha subunit. The type of nucleotide bound at the specificity site determines substrate preference. It seems probable that ATP makes the enzyme reduce CDP and UDP, dGTP favors ADP reduction and dTTP favors GDP reduction. Stimulated by ATP and inhibited by dATP binding to the activity site. Functionally, provides the precursors necessary for DNA synthesis. Catalyzes the biosynthesis of deoxyribonucleotides from the corresponding ribonucleotides. The protein is Ribonucleoside-diphosphate reductase subunit alpha (nrdA) of Buchnera aphidicola subsp. Baizongia pistaciae (strain Bp).